The primary structure comprises 459 residues: Argininosuccinate lyase (459 aa).

It belongs to the lyase 1 family. Argininosuccinate lyase subfamily.

The protein resides in the cytoplasm. The catalysed reaction is 2-(N(omega)-L-arginino)succinate = fumarate + L-arginine. It functions in the pathway amino-acid biosynthesis; L-arginine biosynthesis; L-arginine from L-ornithine and carbamoyl phosphate: step 3/3. The polypeptide is Argininosuccinate lyase (Staphylococcus aureus (strain MSSA476)).